The following is a 354-amino-acid chain: UPF0421 protein BH2644 (354 aa).

The next 4 helical transmembrane spans lie at 22–42 (AVCL…FAVI), 60–80 (LIRL…AYFF), 107–127 (TLVA…HLFA), and 133–153 (VAGT…ILPP).

The protein belongs to the UPF0421 family.

The protein localises to the cell membrane. This chain is UPF0421 protein BH2644, found in Halalkalibacterium halodurans (strain ATCC BAA-125 / DSM 18197 / FERM 7344 / JCM 9153 / C-125) (Bacillus halodurans).